The primary structure comprises 378 residues: Non-functional pseudokinase ZRK6 (378 aa).

Positions 34 to 378 (DGKCNPIKNF…SNNRSQMSSI (345 aa)) constitute a Protein kinase domain. ATP contacts are provided by residues 40–48 (IKNFSYDQI) and lysine 83.

It belongs to the protein kinase superfamily. Ser/Thr protein kinase family. ZRK subfamily. Interacts with RPP13L4/ZAR1.

The protein is Non-functional pseudokinase ZRK6 of Arabidopsis thaliana (Mouse-ear cress).